The primary structure comprises 67 residues: DNA-directed RNA polymerase subunit omega (67 aa).

It belongs to the RNA polymerase subunit omega family. The RNAP catalytic core consists of 2 alpha, 1 beta, 1 beta' and 1 omega subunit. When a sigma factor is associated with the core the holoenzyme is formed, which can initiate transcription.

It catalyses the reaction RNA(n) + a ribonucleoside 5'-triphosphate = RNA(n+1) + diphosphate. Its function is as follows. Promotes RNA polymerase assembly. Latches the N- and C-terminal regions of the beta' subunit thereby facilitating its interaction with the beta and alpha subunits. The sequence is that of DNA-directed RNA polymerase subunit omega (rpoZ) from Treponema pallidum (strain Nichols).